The following is a 521-amino-acid chain: Bifunctional purine biosynthesis protein PurH (521 aa).

The 145-residue stretch at 1-145 folds into the MGS-like domain; it reads MIKQALISVS…KNHRDVTVVV (145 aa).

This sequence belongs to the PurH family.

The enzyme catalyses (6R)-10-formyltetrahydrofolate + 5-amino-1-(5-phospho-beta-D-ribosyl)imidazole-4-carboxamide = 5-formamido-1-(5-phospho-D-ribosyl)imidazole-4-carboxamide + (6S)-5,6,7,8-tetrahydrofolate. It catalyses the reaction IMP + H2O = 5-formamido-1-(5-phospho-D-ribosyl)imidazole-4-carboxamide. The protein operates within purine metabolism; IMP biosynthesis via de novo pathway; 5-formamido-1-(5-phospho-D-ribosyl)imidazole-4-carboxamide from 5-amino-1-(5-phospho-D-ribosyl)imidazole-4-carboxamide (10-formyl THF route): step 1/1. It functions in the pathway purine metabolism; IMP biosynthesis via de novo pathway; IMP from 5-formamido-1-(5-phospho-D-ribosyl)imidazole-4-carboxamide: step 1/1. The chain is Bifunctional purine biosynthesis protein PurH from Burkholderia cenocepacia (strain ATCC BAA-245 / DSM 16553 / LMG 16656 / NCTC 13227 / J2315 / CF5610) (Burkholderia cepacia (strain J2315)).